Consider the following 284-residue polypeptide: Protoheme IX farnesyltransferase (284 aa).

Transmembrane regions (helical) follow at residues 13-33 (IIIGNIILIIGSFLFSSFPFF), 35-55 (VFLFFFTILGTSLVIASSCIF), 87-107 (IFASFIGIVGFFILGLFVNIL), 108-128 (SMFLSFIGFVIYVFFYTFFLK), 133-153 (YSTFIGSFSGSIPSVIGHTAI), 162-182 (FLLFIIFIFWQMSHFYAIAIL), 224-244 (FLGYLSYIFLLFFSFFSFYWL), and 264-284 (FYYSIAVVILFNFLISIDFIF).

This sequence belongs to the UbiA prenyltransferase family. Protoheme IX farnesyltransferase subfamily.

The protein localises to the cell membrane. The catalysed reaction is heme b + (2E,6E)-farnesyl diphosphate + H2O = Fe(II)-heme o + diphosphate. The protein operates within porphyrin-containing compound metabolism; heme O biosynthesis; heme O from protoheme: step 1/1. Functionally, converts heme B (protoheme IX) to heme O by substitution of the vinyl group on carbon 2 of heme B porphyrin ring with a hydroxyethyl farnesyl side group. This chain is Protoheme IX farnesyltransferase, found in Buchnera aphidicola subsp. Schizaphis graminum (strain Sg).